The primary structure comprises 155 residues: Aspartate carbamoyltransferase regulatory chain (155 aa).

Zn(2+) is bound by residues Cys-110, Cys-115, Cys-139, and Cys-142.

The protein belongs to the PyrI family. As to quaternary structure, contains catalytic and regulatory chains. Zn(2+) is required as a cofactor.

In terms of biological role, involved in allosteric regulation of aspartate carbamoyltransferase. This chain is Aspartate carbamoyltransferase regulatory chain, found in Yersinia pseudotuberculosis serotype IB (strain PB1/+).